Here is a 902-residue protein sequence, read N- to C-terminus: Glutamate receptor 4 (902 aa).

The signal sequence occupies residues 1–20 (MRIICRQIVLLFSGFWGLAM). The Extracellular portion of the chain corresponds to 22–544 (AFPSSVQIGG…GVFSFLDPLA (523 aa)). N-linked (GlcNAc...) asparagine glycans are attached at residues N52, N56, N258, N371, N407, and N414. A disulfide bridge connects residues C84 and C331. 3 residues coordinate L-glutamate: P500, T502, and R507. Residues 545-565 (YEIWMCIVFAYIGVSVVLFLV) traverse the membrane as a helical segment. The Cytoplasmic segment spans residues 566–592 (SRFSPYEWHTEEPEDGKEGPSDQPPNE). Positions 593–608 (FGIFNSLWFSLGAFMQ) form an intramembrane region, helical; Pore-forming. The stretch at 609–611 (QGC) is an intramembrane region. A lipid anchor (S-palmitoyl cysteine) is attached at C611. The Cytoplasmic portion of the chain corresponds to 612–617 (DISPRS). Residues 618–638 (LSGRIVGGVWWFFTLIIISSY) form a helical membrane-spanning segment. At 639-813 (TANLAAFLTV…DKTSALSLSN (175 aa)) the chain is on the extracellular side. The L-glutamate site is built by S676, T677, and E727. A disulfide bridge connects residues C740 and C795. Residues 814–834 (VAGVFYILVGGLGLAMLVALI) traverse the membrane as a helical segment. Over 835-902 (EFCYKSRAEA…GLAVIASDLP (68 aa)) the chain is Cytoplasmic. C837 carries S-palmitoyl cysteine lipidation. S862 bears the Phosphoserine mark.

The protein belongs to the glutamate-gated ion channel (TC 1.A.10.1) family. GRIA4 subfamily. Homotetramer or heterotetramer of pore-forming glutamate receptor subunits. Tetramers may be formed by the dimerization of dimers. Interacts with EPB41L1 via its C-terminus. Isoform 3 interacts with PICK1. Found in a complex with GRIA1, GRIA2, GRIA3, CNIH2, CNIH3, CACNG2, CACNG3, CACNG4, CACNG5, CACNG7 and CACNG8. Interacts with CACNG5 and PRKCG. Found in a complex with GRIA1, GRIA2, GRIA3, DLG4, CACNG8 and CNIH2. In terms of processing, palmitoylated. Depalmitoylated upon L-glutamate stimulation. ZDHHC3/GODZ specifically palmitoylates Cys-611, which leads to Golgi retention and decreased cell surface expression. In contrast, Cys-837 palmitoylation does not affect cell surface expression but regulates stimulation-dependent endocytosis. Phosphorylated at Ser-862 by PRKCG; phosphorylation increases plasma membrane-associated GRI4 expression.

It localises to the cell membrane. The protein resides in the postsynaptic cell membrane. It is found in the cell projection. The protein localises to the dendrite. It carries out the reaction Ca(2+)(in) = Ca(2+)(out). The catalysed reaction is Na(+)(in) = Na(+)(out). The enzyme catalyses Mg(2+)(in) = Mg(2+)(out). Its function is as follows. Ionotropic glutamate receptor that functions as a ligand-gated cation channel, gated by L-glutamate and glutamatergic agonists such as alpha-amino-3-hydroxy-5-methyl-4-isoxazolepropionic acid (AMPA), quisqualic acid, and kainic acid. L-glutamate acts as an excitatory neurotransmitter at many synapses in the central nervous system and plays an important role in fast excitatory synaptic transmission. Binding of the excitatory neurotransmitter L-glutamate induces a conformation change, leading to the opening of the cation channel, and thereby converts the chemical signal to an electrical impulse upon entry of monovalent and divalent cations such as sodium and calcium. The receptor then desensitizes rapidly and enters a transient inactive state, characterized by the presence of bound agonist. In the presence of CACNG8, shows resensitization which is characterized by a delayed accumulation of current flux upon continued application of L-glutamate. The sequence is that of Glutamate receptor 4 from Mus musculus (Mouse).